The following is a 356-amino-acid chain: S-adenosylmethionine:tRNA ribosyltransferase-isomerase (356 aa).

This sequence belongs to the QueA family. As to quaternary structure, monomer.

The protein localises to the cytoplasm. It catalyses the reaction 7-aminomethyl-7-carbaguanosine(34) in tRNA + S-adenosyl-L-methionine = epoxyqueuosine(34) in tRNA + adenine + L-methionine + 2 H(+). It participates in tRNA modification; tRNA-queuosine biosynthesis. Functionally, transfers and isomerizes the ribose moiety from AdoMet to the 7-aminomethyl group of 7-deazaguanine (preQ1-tRNA) to give epoxyqueuosine (oQ-tRNA). This Xanthomonas oryzae pv. oryzae (strain KACC10331 / KXO85) protein is S-adenosylmethionine:tRNA ribosyltransferase-isomerase.